The sequence spans 116 residues: Large ribosomal subunit protein bL20 (116 aa).

This sequence belongs to the bacterial ribosomal protein bL20 family.

Binds directly to 23S ribosomal RNA and is necessary for the in vitro assembly process of the 50S ribosomal subunit. It is not involved in the protein synthesizing functions of that subunit. This chain is Large ribosomal subunit protein bL20 (rplT), found in Helicobacter pylori (strain ATCC 700392 / 26695) (Campylobacter pylori).